The chain runs to 570 residues: Periplasmic trehalase (570 aa).

The first 34 residues, 1-34, serve as a signal peptide directing secretion; sequence MITPALRHSGTLSFAIKLTVASTLLTFASLSAHA. Substrate-binding positions include Arg-157, 164-165, Asn-201, 210-212, 282-284, and Gly-315; these read WD, RSQ, and RPE. Catalysis depends on proton donor/acceptor residues Asp-317 and Glu-501. A substrate-binding site is contributed by Glu-516. A disordered region spans residues 542–570; it reads KPCDSVPATRPAAPGASQPAPQKQVETTP. Over residues 552–570 the composition is skewed to low complexity; that stretch reads PAAPGASQPAPQKQVETTP.

This sequence belongs to the glycosyl hydrolase 37 family. As to quaternary structure, monomer.

It is found in the periplasm. The enzyme catalyses alpha,alpha-trehalose + H2O = alpha-D-glucose + beta-D-glucose. Provides the cells with the ability to utilize trehalose at high osmolarity by splitting it into glucose molecules that can subsequently be taken up by the phosphotransferase-mediated uptake system. The chain is Periplasmic trehalase from Citrobacter koseri (strain ATCC BAA-895 / CDC 4225-83 / SGSC4696).